Here is a 39-residue protein sequence, read N- to C-terminus: MAAGAVFLALSAQLLQARLMKEESPVVSWWLEPEDGTAL.

Positions 1–17 (MAAGAVFLALSAQLLQA) are cleaved as a signal peptide.

The protein belongs to the BAGE family. Not expressed in normal tissues except in testis. Expressed in melanoma, bladder and lung carcinomas.

It is found in the secreted. In terms of biological role, unknown. Candidate gene encoding tumor antigens. This is B melanoma antigen 4 (BAGE4) from Homo sapiens (Human).